Reading from the N-terminus, the 1201-residue chain is MKMNRHFTVPQNGESSTIQWTKRNSKITNPDGSKVFEANDILVPEDWSQVAVDILAQKYFRRKGVPKYLKKVQEDGIPEWLQKSIPDTEKLESLKPEDRFGGETSALEVFHRLAGCWTYWGYKYKYFSDEESAKIFYDEIVYMLATQMAAPNSPQWFNTGLNWAYGIDGKSQGHYYVDPSTGKLVKSTSAYEHPQPHACFIQSVDDDLVNEGGIMDLWVREARLFKYGSGTGTNFSNLRGENEPLSGGGKSSGLMSFLKIGDRAAGAIKSGGTTRRAAKMVCLDVDHPDIENFIDWKVTEEKKVASLVTGSMLNNRHLNAIMSACYEMEGEDRFNPKKNSSLKKTIQDAKKVLIPDNYIKRVIDLARQGYKEILFEELTTDWQSDAYNTVSGQNSNNSIRLTNEFMAAVEQDQPWNLYFRTEKEKAKVEGRKAKPSQTLRARELWEKISYAAWASADPGTQYHTTINEWHTCPEDGPINASNPCSEYMFLDNTACNLASANLQKFVNLETLNFDVEGFRYLCKLWTIILEISVTMAQFPSKEIAELSYKFRTLGLGYANLGSVLMVLGIPYDSQQAMAITGAISSIMHMTAYATSAEMAKEQGPFVGYAKNQKHMLRVIRNHRRAAYNAPSGDYEGLTITPIGINPAFCPSYMLKAAQEDADLALSLGEKYGFRNAQVTVIAPTGTIGLVMDCDTTGIEPDFTLVKFKKLAGGGYFKIINQSVPYGLKKLGYSPSEIEAIVNYCKGHATLNGAPVINTQALKEKGFTNEILEKVEASLPLAFDINFAFNKFNLGENFLTKNLGISKEIFDSPGFSLLEHLGFTKEDINKANDYVCGTMTIENAPFLKEKDYPVFDCANKCGKYGKRFLSYESHIRIMAAAQPFISGAISKTINLPEEAVIEDIKNAYFLSWKMMIKANALYRDGSKLSQPLNSVLELLNGIEIDDQEEIREATISKDPVQIAEKIVTKYISHRRKLPSRRAGYTQKAIVGGHKVYLRTGEYEDGQIGEIFIDMHKEGAAFRSLMNAFAISVSLGLQHGVPLEEYVDAFTFFKFEPNGIVSGNKHIKMSTSVIDYIFRELAITYLGRYDLGQVAPEDLRGDEIGSKRATAESNGQEKETLSSMTAVIEPTPKKEVETISYSQMISKEKPSSSPSGISLLEEVKLAKIKGYTGDSCSECGSFEMVRNGSCLKCMSCGSTTGCS.

Substrate contacts are provided by residues S153, 198 to 199 (AC), G230, 482 to 486 (NPCSE), and 683 to 687 (PTGTI). Cysteines 199 and 495 form a disulfide. N482 serves as the catalytic Proton acceptor. Catalysis depends on C484, which acts as the Cysteine radical intermediate. E486 serves as the catalytic Proton acceptor. Basic and acidic residues predominate over residues 1100–1118 (DEIGSKRATAESNGQEKET). The tract at residues 1100-1120 (DEIGSKRATAESNGQEKETLS) is disordered.

Belongs to the ribonucleoside diphosphate reductase class-2 family. The cofactor is adenosylcob(III)alamin.

The catalysed reaction is a 2'-deoxyribonucleoside 5'-diphosphate + [thioredoxin]-disulfide + H2O = a ribonucleoside 5'-diphosphate + [thioredoxin]-dithiol. Its function is as follows. Catalyzes the reduction of ribonucleotides to deoxyribonucleotides. May function to provide a pool of deoxyribonucleotide precursors for DNA repair during oxygen limitation and/or for immediate growth after restoration of oxygen. This Leptospira interrogans serogroup Icterohaemorrhagiae serovar Lai (strain 56601) protein is Vitamin B12-dependent ribonucleotide reductase (nrdJ).